The primary structure comprises 673 residues: uncharacterized protein (673 aa).

Topologically, residues 1–208 (MSTHSNDYFS…STGQLELPPD (208 aa)) are cytoplasmic. Phosphoserine is present on residues S57, S112, and S172. Residues 209-229 (GGYGWVVTFCVFLTMFSTWGC) traverse the membrane as a helical segment. Residue N230 is glycosylated (N-linked (GlcNAc...) asparagine). The Lumenal segment spans residues 230 to 255 (NASFGVDLAYYLNHDTYPGASKYDYA). Residues 256–276 (LIAGLTVFLGQLLSPLVMALM) traverse the membrane as a helical segment. Position 277 (R277) is a topological domain, cytoplasmic. The helical transmembrane segment at 278–298 (IIGLRTTMLFGDAVMLAAYLL) threads the bilayer. The Lumenal segment spans residues 299 to 315 (ASFTTKLWQLYVTQGFM). Residues 316–336 (VGCSISLIFVPATTVLPGWFL) form a helical membrane-spanning segment. The Cytoplasmic portion of the chain corresponds to 337–339 (KKR). The chain crosses the membrane as a helical span at residues 340–360 (AVAMGVSLLGTGAGGVVYGLA). Residues 361–372 (TNKMLSDFGNTR) lie on the Lumenal side of the membrane. The chain crosses the membrane as a helical span at residues 373 to 393 (WCLRIIGISCSISVLVAIALL). Residues 394–426 (KERNPTPAIGLKSPRAMFEQLKAMFSLKVITKP) lie on the Cytoplasmic side of the membrane. Residues 427 to 447 (FVVLIALWFMFALFAYNMMVF) traverse the membrane as a helical segment. Residues 448–504 (TLSSYAISKGLSSHDASTLTAILNGSQSIGRPLMGLAGDKFGRANVTIVLTTLLTIY) are Lumenal-facing. N471 and N492 each carry an N-linked (GlcNAc...) asparagine glycan. Residues 505–525 (MFAFWIPAHTFVQLIFFSILV) form a helical membrane-spanning segment. The Cytoplasmic segment spans residues 526–549 (GSCVGVANVMNTVLIADMVKPEEF). Residues 550-570 (LPAWAFVNYCGAPFLLVCEVI) traverse the membrane as a helical segment. Residues 571-584 (AQALTVEKDKSNPY) are Lumenal-facing. A helical transmembrane segment spans residues 585–605 (LHAQIFCGCCFIAALILISIL). At 606–673 (REYSIRMKLT…FLRMVYPMKV (68 aa)) the chain is on the cytoplasmic side. S637 is subject to Phosphoserine.

This sequence belongs to the major facilitator superfamily. Monocarboxylate porter (TC 2.A.1.13) family.

The protein resides in the endoplasmic reticulum membrane. This is an uncharacterized protein from Saccharomyces cerevisiae (strain ATCC 204508 / S288c) (Baker's yeast).